Reading from the N-terminus, the 481-residue chain is Aspartyl/glutamyl-tRNA(Asn/Gln) amidotransferase subunit B (481 aa).

This sequence belongs to the GatB/GatE family. GatB subfamily. In terms of assembly, heterotrimer of A, B and C subunits.

The enzyme catalyses L-glutamyl-tRNA(Gln) + L-glutamine + ATP + H2O = L-glutaminyl-tRNA(Gln) + L-glutamate + ADP + phosphate + H(+). It catalyses the reaction L-aspartyl-tRNA(Asn) + L-glutamine + ATP + H2O = L-asparaginyl-tRNA(Asn) + L-glutamate + ADP + phosphate + 2 H(+). Functionally, allows the formation of correctly charged Asn-tRNA(Asn) or Gln-tRNA(Gln) through the transamidation of misacylated Asp-tRNA(Asn) or Glu-tRNA(Gln) in organisms which lack either or both of asparaginyl-tRNA or glutaminyl-tRNA synthetases. The reaction takes place in the presence of glutamine and ATP through an activated phospho-Asp-tRNA(Asn) or phospho-Glu-tRNA(Gln). The sequence is that of Aspartyl/glutamyl-tRNA(Asn/Gln) amidotransferase subunit B from Marinomonas sp. (strain MWYL1).